The sequence spans 220 residues: uncharacterized protein (220 aa).

A run of 7 helical transmembrane segments spans residues 25–45 (YFLLGLTLAFSAVVAYISMSL), 50–70 (PGLILMLAGFYGLLFLTYKLS), 74–94 (LGILSTFAFTGFLGYTLGPIL), 105–125 (IVVLALAGTAAVFFACSAYVL), 135–155 (SGTIFALFIVLLLGMVASFFF), 158–178 (PMLYIAISGLFVVFSTLGILY), and 196–216 (VSIFVSLYNLFISLLNIFSIL).

Belongs to the BI1 family.

It is found in the cell membrane. This is an uncharacterized protein from Pasteurella multocida (strain Pm70).